A 525-amino-acid chain; its full sequence is NAD(P)H-quinone oxidoreductase chain 4-1 (525 aa).

Helical transmembrane passes span 4–24, 37–57, 89–109, 111–131, 134–154, 167–187, 210–230, 241–261, 273–293, 309–329, 330–350, 385–405, 416–436, and 462–482; these read FPWL…IPII, LAVG…GFDL, LIIL…PVTL, PKLF…VFAV, ILLF…ILSI, FILY…TLAF, LLLY…FPLH, TAPA…YALL, AVFA…AAFT, ISHM…GMSG, AMLQ…MVGA, LALP…GFAT, IVVV…LSML, and VFII…PKLI.

Belongs to the complex I subunit 4 family.

It localises to the cellular thylakoid membrane. It carries out the reaction a plastoquinone + NADH + (n+1) H(+)(in) = a plastoquinol + NAD(+) + n H(+)(out). The catalysed reaction is a plastoquinone + NADPH + (n+1) H(+)(in) = a plastoquinol + NADP(+) + n H(+)(out). In terms of biological role, NDH-1 shuttles electrons from NAD(P)H, via FMN and iron-sulfur (Fe-S) centers, to quinones in the respiratory chain. The immediate electron acceptor for the enzyme in this species is believed to be plastoquinone. Couples the redox reaction to proton translocation (for every two electrons transferred, four hydrogen ions are translocated across the cytoplasmic membrane), and thus conserves the redox energy in a proton gradient. This is NAD(P)H-quinone oxidoreductase chain 4-1 (ndhD1) from Synechocystis sp. (strain ATCC 27184 / PCC 6803 / Kazusa).